A 308-amino-acid chain; its full sequence is Cytochrome b (308 aa).

4 consecutive transmembrane segments (helical) span residues 1–21 (FGSLLGICLVTQIITGLLLAT), 45–66 (WLIRNLHANGASFFFICIYLHI), 81–101 (WNTGVILLLTLMATAFVGYVL), and 146–166 (FFALHFLLPFVIAGITLVHLT). Heme b-binding residues include H51 and H65. Residues H150 and H164 each contribute to the heme b site. An a ubiquinone-binding site is contributed by H169. Transmembrane regions (helical) follow at residues 194 to 214 (MKDILGFALLFIALVAMALFS), 256 to 276 (LGGVLALAASVLVLFLIPLLH), and 288 to 308 (LSQILFWTLVANLLVLTWVGS).

Belongs to the cytochrome b family. In terms of assembly, the cytochrome bc1 complex contains 11 subunits: 3 respiratory subunits (MT-CYB, CYC1 and UQCRFS1), 2 core proteins (UQCRC1 and UQCRC2) and 6 low-molecular weight proteins (UQCRH/QCR6, UQCRB/QCR7, UQCRQ/QCR8, UQCR10/QCR9, UQCR11/QCR10 and a cleavage product of UQCRFS1). This cytochrome bc1 complex then forms a dimer. Heme b is required as a cofactor.

Its subcellular location is the mitochondrion inner membrane. Component of the ubiquinol-cytochrome c reductase complex (complex III or cytochrome b-c1 complex) that is part of the mitochondrial respiratory chain. The b-c1 complex mediates electron transfer from ubiquinol to cytochrome c. Contributes to the generation of a proton gradient across the mitochondrial membrane that is then used for ATP synthesis. The chain is Cytochrome b (MT-CYB) from Amblyornis macgregoriae (Macgregor's bowerbird).